The following is a 381-amino-acid chain: Alkanesulfonate monooxygenase (381 aa).

It belongs to the SsuD family. In terms of assembly, homotetramer.

It catalyses the reaction an alkanesulfonate + FMNH2 + O2 = an aldehyde + FMN + sulfite + H2O + 2 H(+). Functionally, catalyzes the desulfonation of aliphatic sulfonates. This is Alkanesulfonate monooxygenase from Shigella flexneri serotype 5b (strain 8401).